The chain runs to 284 residues: 2-dehydro-3-deoxyphosphooctonate aldolase (284 aa).

This sequence belongs to the KdsA family.

It localises to the cytoplasm. It catalyses the reaction D-arabinose 5-phosphate + phosphoenolpyruvate + H2O = 3-deoxy-alpha-D-manno-2-octulosonate-8-phosphate + phosphate. It functions in the pathway carbohydrate biosynthesis; 3-deoxy-D-manno-octulosonate biosynthesis; 3-deoxy-D-manno-octulosonate from D-ribulose 5-phosphate: step 2/3. The protein operates within bacterial outer membrane biogenesis; lipopolysaccharide biosynthesis. The protein is 2-dehydro-3-deoxyphosphooctonate aldolase of Pectobacterium carotovorum subsp. carotovorum (strain PC1).